Here is a 170-residue protein sequence, read N- to C-terminus: Macro domain-containing protein DR_2288 (170 aa).

One can recognise a Macro domain in the interval 1–170 (MPLELVQGDI…HVFERALAQL (170 aa)).

This sequence belongs to the MacroD-type family.

The sequence is that of Macro domain-containing protein DR_2288 from Deinococcus radiodurans (strain ATCC 13939 / DSM 20539 / JCM 16871 / CCUG 27074 / LMG 4051 / NBRC 15346 / NCIMB 9279 / VKM B-1422 / R1).